Reading from the N-terminus, the 478-residue chain is MLSDELESKPELLVQFVQNTSIPLGQGLVESEAKDITCLSLLPVTEASECSRLMLPDDTTNHSNSSKEVPSSAVLRSLRVNVGPDGEETRAQTVQKSPEFLSTSESSSLLQDLQPSDSTSFILLNLTRAGLGSSAEHLVFVQDEAEDSGNDFLSSESTDSSIPWFLRVQELAHDSLIAATRAQLAKNAKTSSNGENVHLGSGDGQSKDSGPLPQVEKKLKCTVEGCDRTFVWPAHFKYHLKTHRNDRSFICPAEGCGKSFYVLQRLKVHMRTHNGEKPFMCHESGCGKQFTTAGNLKNHRRIHTGEKPFLCEAQGCGRSFAEYSSLRKHLVVHSGEKPHQCQVCGKTFSQSGSRNVHMRKHHLQLGAAGSQEQEQTAEPLMGSSLLEEASVPSKNLVSMNSQPSLGGESLNLPNTNSILGVDDEVLAEGSPRSLSSVPDVTHHLVTMQSGRQSYEVSVLTAVNPQELLNQGDLTERRT.

The disordered stretch occupies residues 187–213; that stretch reads NAKTSSNGENVHLGSGDGQSKDSGPLP. C2H2-type zinc fingers lie at residues 219–243, 249–273, 279–303, 309–333, and 339–362; these read LKCT…LKTH, FICP…MRTH, FMCH…RRIH, FLCE…LVVH, and HQCQ…RKHH. Cys-221, Cys-226, His-239, His-243, Cys-251, Cys-256, His-269, His-273, Cys-281, Cys-286, His-299, His-303, Cys-311, Cys-316, His-329, His-333, Cys-341, Cys-344, His-357, and His-361 together coordinate Zn(2+).

As to quaternary structure, interacts with CDKN2A/p14ARF. Post-translationally, sumoylated. Sumoylation increases its half-life, possibly by blocking ubiquitin-mediated degradation. O-glycosylated. O-GlcNAcylation may occur in response to increasing glucose levels and affect transcription factor activity. In terms of tissue distribution, widely expressed.

It localises to the nucleus. Its subcellular location is the chromosome. Its function is as follows. Transcription factor that binds to the sequence motif 5'-CATCCCATAATA-3', and is specifically required to silence expression of fetal hemoglobin in adult erythroid cells. Prevents expression of fetal hemoglobin genes HBG1 and HBG2 through CHD4: acts as a direct transcriptional activator of CHD4, a central component of the NuRD complex that represses transcription of fetal hemoglobin genes HBG1 and HBG2 in erythroid cells. May also activate transcription of matrix-remodeling genes such as MMP1 during fibroblast senescence. May activate transcription of the gap junction gene GJC1, perhaps in response to increasing glucose. However, recent studies suggest that ZNF410 is dedicated to regulate expression of a single gene: CHD4. The protein is Zinc finger protein 410 of Homo sapiens (Human).